The following is a 410-amino-acid chain: Arginine deiminase (410 aa).

Residue cysteine 400 is the Amidino-cysteine intermediate of the active site.

It belongs to the arginine deiminase family.

Its subcellular location is the cytoplasm. The enzyme catalyses L-arginine + H2O = L-citrulline + NH4(+). The protein operates within amino-acid degradation; L-arginine degradation via ADI pathway; carbamoyl phosphate from L-arginine: step 1/2. In Levilactobacillus brevis (strain ATCC 367 / BCRC 12310 / CIP 105137 / JCM 1170 / LMG 11437 / NCIMB 947 / NCTC 947) (Lactobacillus brevis), this protein is Arginine deiminase.